The sequence spans 121 residues: uncharacterized protein (121 aa).

The chain crosses the membrane as a helical span at residues 65–84; it reads TILFYTPTLICFLFLQNFLY.

Its subcellular location is the membrane. This is an uncharacterized protein from Saccharomyces cerevisiae (strain ATCC 204508 / S288c) (Baker's yeast).